The primary structure comprises 232 residues: 5'-methylthioadenosine/S-adenosylhomocysteine nucleosidase (232 aa).

Glu-12 acts as the Proton acceptor in catalysis. Substrate is bound by residues Gly-78, Ile-152, and 173–174 (ME). Catalysis depends on Asp-197, which acts as the Proton donor.

It belongs to the PNP/UDP phosphorylase family. MtnN subfamily. In terms of assembly, homodimer.

The catalysed reaction is S-adenosyl-L-homocysteine + H2O = S-(5-deoxy-D-ribos-5-yl)-L-homocysteine + adenine. It catalyses the reaction S-methyl-5'-thioadenosine + H2O = 5-(methylsulfanyl)-D-ribose + adenine. The enzyme catalyses 5'-deoxyadenosine + H2O = 5-deoxy-D-ribose + adenine. It participates in amino-acid biosynthesis; L-methionine biosynthesis via salvage pathway; S-methyl-5-thio-alpha-D-ribose 1-phosphate from S-methyl-5'-thioadenosine (hydrolase route): step 1/2. Its function is as follows. Catalyzes the irreversible cleavage of the glycosidic bond in both 5'-methylthioadenosine (MTA) and S-adenosylhomocysteine (SAH/AdoHcy) to adenine and the corresponding thioribose, 5'-methylthioribose and S-ribosylhomocysteine, respectively. Also cleaves 5'-deoxyadenosine, a toxic by-product of radical S-adenosylmethionine (SAM) enzymes, into 5-deoxyribose and adenine. Thus, is required for in vivo function of the radical SAM enzymes biotin synthase and lipoic acid synthase, that are inhibited by 5'-deoxyadenosine accumulation. The polypeptide is 5'-methylthioadenosine/S-adenosylhomocysteine nucleosidase (Salmonella arizonae (strain ATCC BAA-731 / CDC346-86 / RSK2980)).